The sequence spans 145 residues: UPF0179 protein MmarC7_0952 (145 aa).

Belongs to the UPF0179 family.

The chain is UPF0179 protein MmarC7_0952 from Methanococcus maripaludis (strain C7 / ATCC BAA-1331).